Here is a 433-residue protein sequence, read N- to C-terminus: Serine--tRNA ligase (433 aa).

T235–E237 is a binding site for L-serine. R266–E268 contributes to the ATP binding site. Residue E289 participates in L-serine binding. E353–S356 contacts ATP. S388 is an L-serine binding site.

Belongs to the class-II aminoacyl-tRNA synthetase family. Type-1 seryl-tRNA synthetase subfamily. As to quaternary structure, homodimer. The tRNA molecule binds across the dimer.

It is found in the cytoplasm. The catalysed reaction is tRNA(Ser) + L-serine + ATP = L-seryl-tRNA(Ser) + AMP + diphosphate + H(+). The enzyme catalyses tRNA(Sec) + L-serine + ATP = L-seryl-tRNA(Sec) + AMP + diphosphate + H(+). It functions in the pathway aminoacyl-tRNA biosynthesis; selenocysteinyl-tRNA(Sec) biosynthesis; L-seryl-tRNA(Sec) from L-serine and tRNA(Sec): step 1/1. Functionally, catalyzes the attachment of serine to tRNA(Ser). Is also able to aminoacylate tRNA(Sec) with serine, to form the misacylated tRNA L-seryl-tRNA(Sec), which will be further converted into selenocysteinyl-tRNA(Sec). The sequence is that of Serine--tRNA ligase from Burkholderia pseudomallei (strain 1106a).